Here is a 60-residue protein sequence, read N- to C-terminus: MADLKITLIKSAVHRLPKQRAIVKSLGLGRVSSSVVKPNNEATRGAIFHIAHLVNVEEVK.

It belongs to the universal ribosomal protein uL30 family. As to quaternary structure, part of the 50S ribosomal subunit.

In Leuconostoc mesenteroides subsp. mesenteroides (strain ATCC 8293 / DSM 20343 / BCRC 11652 / CCM 1803 / JCM 6124 / NCDO 523 / NBRC 100496 / NCIMB 8023 / NCTC 12954 / NRRL B-1118 / 37Y), this protein is Large ribosomal subunit protein uL30.